A 555-amino-acid chain; its full sequence is Glutamate--tRNA ligase (555 aa).

The 'HIGH' region motif lies at Pro-100 to His-110.

This sequence belongs to the class-I aminoacyl-tRNA synthetase family. Glutamate--tRNA ligase type 2 subfamily.

The protein localises to the cytoplasm. It carries out the reaction tRNA(Glu) + L-glutamate + ATP = L-glutamyl-tRNA(Glu) + AMP + diphosphate. Its function is as follows. Catalyzes the attachment of glutamate to tRNA(Glu) in a two-step reaction: glutamate is first activated by ATP to form Glu-AMP and then transferred to the acceptor end of tRNA(Glu). This is Glutamate--tRNA ligase from Methanococcus maripaludis (strain C6 / ATCC BAA-1332).